The primary structure comprises 121 residues: MLTNNQLLKHSRIKKKKQSYNFYTKPQIKGLCIKVFTRTPKKPNSALRKIAKIKLKNKKEILAYIPGEGHALQDHNFVLIKKGRVQDLPGIKYKVIRGVLDTIGVLNRKSSRSKYGTKKII.

It belongs to the universal ribosomal protein uS12 family. In terms of assembly, part of the 30S ribosomal subunit.

It localises to the plastid. The protein resides in the apicoplast. Its function is as follows. With S4 and S5 plays an important role in translational accuracy. Located at the interface of the 30S and 50S subunits. The chain is Small ribosomal subunit protein uS12c (rps12) from Toxoplasma gondii.